We begin with the raw amino-acid sequence, 753 residues long: Pumilio homolog 23 (753 aa).

Residues 1–84 (MVSVGSKSLP…SEFEHQNQFV (84 aa)) are disordered. 3 stretches are compositionally biased toward basic and acidic residues: residues 23 to 38 (MGER…ERNK), 47 to 57 (GNRGFDVDSSK), and 73 to 84 (KHSEFEHQNQFV). Pumilio repeat units lie at residues 123–158 (ETRG…SFIR), 159–198 (NSAS…SVIE), 206–244 (KVIV…ELYG), 284–325 (GLLS…EIIP), 345–380 (NVAK…EMFN), 381–418 (KVFK…IMWE), 526–563 (SMKA…RLII), and 564–599 (KLRG…AIAS). Positions 322 to 675 (EIIPLILRCN…DASEDAAQEI (354 aa)) constitute a PUM-HD domain. Basic and acidic residues-rich tracts occupy residues 677-688 (VKNTRKEIDHHP), 699-712 (HAKD…GEKR), and 719-728 (KTSEATDKPK). The tract at residues 677-753 (VKNTRKEIDH…KNRHSNKMRI (77 aa)) is disordered. Over residues 744–753 (KNRHSNKMRI) the composition is skewed to basic residues.

It localises to the nucleus. The protein localises to the nucleolus. Its function is as follows. Sequence-specific RNA-binding protein that regulates translation and mRNA stability by binding the 3'-UTR of target mRNAs. The sequence is that of Pumilio homolog 23 (APUM23) from Arabidopsis thaliana (Mouse-ear cress).